We begin with the raw amino-acid sequence, 825 residues long: Probable inorganic carbon transporter subunit DabA (825 aa).

The Zn(2+) site is built by C334, D336, H521, and C536.

This sequence belongs to the inorganic carbon transporter (TC 9.A.2) DabA family. In terms of assembly, forms a complex with DabB. It depends on Zn(2+) as a cofactor.

It localises to the cell inner membrane. Its function is as follows. Part of an energy-coupled inorganic carbon pump. The protein is Probable inorganic carbon transporter subunit DabA of Acidithiobacillus ferrooxidans (strain ATCC 53993 / BNL-5-31) (Leptospirillum ferrooxidans (ATCC 53993)).